The sequence spans 661 residues: Junctophilin-1 (661 aa).

Topologically, residues 1–639 (MTGGRFDFDD…EKEANSGPNS (639 aa)) are cytoplasmic. 5 MORN repeats span residues 14–36 (YCGGWEEGKAHGHGICTGPKGQG), 38–59 (YSGSWSHGFEVVGGYTWPSGNT), 60–82 (YQGYWAQGKRHGLGVETKGKWMY), 106–128 (YEGTWSNGLQDGYGVETYGDGGT), and 129–151 (YQGQWAGGMRHGYGVRQSVPYGM). Phosphoserine is present on residues serine 157, serine 216, and serine 220. The tract at residues 228-247 (SKSSISSKRSSVRSDAAMSR) is disordered. 2 MORN repeats span residues 281 to 303 (YMGEWKNDKRNGFGVSERSNGMK) and 304 to 326 (YEGEWANNKRHGYGCTVFPDGSK). Basic and acidic residues predominate over residues 433–454 (DAKENPEEKVPEKPPTPKESPH). Positions 433–631 (DAKENPEEKV…SNDSCPALEK (199 aa)) are disordered. Threonine 448 carries the phosphothreonine modification. Serine 452 carries the post-translational modification Phosphoserine. Threonine 461 carries the phosphothreonine modification. A phosphoserine mark is found at serine 465, serine 469, and serine 475. Residues 599–613 (VAKESKAEPKAKKSE) show a composition bias toward basic and acidic residues. The helical; Anchor for type IV membrane protein transmembrane segment at 640-660 (IMIVLVMLLNIGLAILFVHFL) threads the bilayer.

The protein belongs to the junctophilin family. Abundantly expressed in skeletal muscle. Very low levels in heart.

It is found in the cell membrane. The protein localises to the endoplasmic reticulum membrane. The protein resides in the sarcoplasmic reticulum membrane. Junctophilins contribute to the formation of junctional membrane complexes (JMCs) which link the plasma membrane with the endoplasmic or sarcoplasmic reticulum in excitable cells. Provides a structural foundation for functional cross-talk between the cell surface and intracellular calcium release channels. JPH1 contributes to the construction of the skeletal muscle triad by linking the t-tubule (transverse-tubule) and SR (sarcoplasmic reticulum) membranes. This Homo sapiens (Human) protein is Junctophilin-1 (JPH1).